The primary structure comprises 587 residues: Xyloglucan-specific endo-beta-1,4-glucanase BoGH9A (587 aa).

Residues 1–19 (MKIVRYIALFGILSGLAVA) form the signal peptide. C20 carries the N-palmitoyl cysteine lipid modification. A lipid anchor (S-diacylglycerol cysteine) is attached at C20. Catalysis depends on D185, which acts as the Nucleophile. Residues H511 and D553 contribute to the active site. The active-site Proton donor is E562.

This sequence belongs to the glycosyl hydrolase 9 (cellulase E) family.

Its subcellular location is the cell outer membrane. The enzyme catalyses xyloglucan + H2O = xyloglucan oligosaccharides.. It participates in glucan metabolism; xyloglucan degradation. In terms of biological role, catalyzes endohydrolysis of 1,4-beta-D-glucosidic linkages in xyloglucan with retention of the beta-configuration of the glycosyl residues in xyloglucan degradation. Cleaves the backbone of the 3 major types of natural xyloglucans (seed galactoxyloglucan from tamarind kernel, dicot fucogalactoxyloglucan from lettuce leaves, and solanaceous arabinogalactoxyloglucan from tomato fruit), to produce xyloglucan oligosaccharides. May be superfluous in xyloglucan degradation compared to BoGH5A (AC A7LXT7), the other Xyloglucan-specific endo-beta-1,4-glucanase. In Bacteroides ovatus (strain ATCC 8483 / DSM 1896 / JCM 5824 / BCRC 10623 / CCUG 4943 / NCTC 11153), this protein is Xyloglucan-specific endo-beta-1,4-glucanase BoGH9A.